Consider the following 213-residue polypeptide: Putative 3-methyladenine DNA glycosylase (213 aa).

The tract at residues 165 to 187 (GTPVPPDQVRNGPRTGVSGDGGV) is disordered.

This sequence belongs to the DNA glycosylase MPG family.

The protein is Putative 3-methyladenine DNA glycosylase of Streptomyces avermitilis (strain ATCC 31267 / DSM 46492 / JCM 5070 / NBRC 14893 / NCIMB 12804 / NRRL 8165 / MA-4680).